A 637-amino-acid polypeptide reads, in one-letter code: Chaperone protein HtpG (637 aa).

The tract at residues M1–R345 is a; substrate-binding. Positions E346 to K562 are b. Residues L563–K637 are c.

This sequence belongs to the heat shock protein 90 family. In terms of assembly, homodimer.

It localises to the cytoplasm. In terms of biological role, molecular chaperone. Has ATPase activity. The polypeptide is Chaperone protein HtpG (Shewanella sp. (strain W3-18-1)).